The primary structure comprises 295 residues: MTASTPVAQTHIQSLPLLHSGKVRDIYAVDDERLLIVATDRLSAFDVILPDPIPDKGAVLTRVSNFWFRKTAHLAANHLLDTPPESVVAPEEADQVRDRGVVVRRLQALPVEAIVRGYLAGSGWQSYQRDGTVSGVALPDGLRQSDRLPEPIFTPTTKAAVGDHDEPISFAQTVERIGADLAERIRTIALEVFALATEYAESRGLIIADTKLEFGVTPEGEPVIIDELLTPDSSRFWPADAWQPGATPPAFDKQYIRDHLEALGWDKRPPAPHLTDDVIRQTAEKYREAERLLTR.

Belongs to the SAICAR synthetase family.

The enzyme catalyses 5-amino-1-(5-phospho-D-ribosyl)imidazole-4-carboxylate + L-aspartate + ATP = (2S)-2-[5-amino-1-(5-phospho-beta-D-ribosyl)imidazole-4-carboxamido]succinate + ADP + phosphate + 2 H(+). Its pathway is purine metabolism; IMP biosynthesis via de novo pathway; 5-amino-1-(5-phospho-D-ribosyl)imidazole-4-carboxamide from 5-amino-1-(5-phospho-D-ribosyl)imidazole-4-carboxylate: step 1/2. This chain is Phosphoribosylaminoimidazole-succinocarboxamide synthase, found in Halorhodospira halophila (strain DSM 244 / SL1) (Ectothiorhodospira halophila (strain DSM 244 / SL1)).